The chain runs to 1088 residues: uncharacterized protein (1088 aa).

A Phosphoserine modification is found at serine 299. The tract at residues 954-980 is disordered; that stretch reads PRSSVATTASTESSEQGPKMKRMARRK. The span at 956 to 968 shows a compositional bias: low complexity; sequence SSVATTASTESSE. A Phosphoserine modification is found at serine 984. Threonine 1013 bears the Phosphothreonine mark. The segment at 1063 to 1088 is disordered; the sequence is MKVTDKAKDEDIDPMDPMSPLNKDVS. A Phosphoserine modification is found at serine 1081.

This is an uncharacterized protein from Saccharomyces cerevisiae (strain ATCC 204508 / S288c) (Baker's yeast).